The chain runs to 469 residues: Citrate synthase, mitochondrial (469 aa).

The N-terminal 30 residues, 1–30 (MSFLSVSRLAPKLLNSKNATYFLVAARNAS), are a transit peptide targeting the mitochondrion. Catalysis depends on residues His-304 and His-350. Arg-359 contributes to the oxaloacetate binding site. Asp-405 is a catalytic residue. Oxaloacetate contacts are provided by Arg-431 and Arg-451.

This sequence belongs to the citrate synthase family. In terms of assembly, homodimer.

The protein localises to the mitochondrion matrix. It catalyses the reaction oxaloacetate + acetyl-CoA + H2O = citrate + CoA + H(+). It functions in the pathway carbohydrate metabolism; tricarboxylic acid cycle; isocitrate from oxaloacetate: step 1/2. Its function is as follows. Key enzyme of the Krebs tricarboxylic acid cycle which catalyzes the synthesis of citrate from acetyl coenzyme A and oxaloacetate. This chain is Citrate synthase, mitochondrial (cs), found in Katsuwonus pelamis (Skipjack tuna).